The chain runs to 894 residues: Translation factor GUF1 homolog, mitochondrial (894 aa).

The tract at residues 157–189 (EDEGLDGGPPPGMEAKKSSSSSSSNNVHSNCSD) is disordered. Over residues 174 to 188 (SSSSSSSNNVHSNCS) the composition is skewed to low complexity. Residues 199–376 (ENIRNFCILA…RIVSEIPSPA (178 aa)) enclose the tr-type G domain. Residues 208-215 (AHIDSGKS), 269-273 (DTPGH), and 323-326 (NKID) contribute to the GTP site. The interval 649–674 (DHDDCNDNGGSNSDDRSDRSGKNPPD) is disordered.

The protein belongs to the TRAFAC class translation factor GTPase superfamily. Classic translation factor GTPase family. LepA subfamily.

Its subcellular location is the mitochondrion inner membrane. The catalysed reaction is GTP + H2O = GDP + phosphate + H(+). In terms of biological role, promotes mitochondrial protein synthesis. May act as a fidelity factor of the translation reaction, by catalyzing a one-codon backward translocation of tRNAs on improperly translocated ribosomes. Binds to mitochondrial ribosomes in a GTP-dependent manner. The polypeptide is Translation factor GUF1 homolog, mitochondrial (Plasmodium knowlesi (strain H)).